A 1302-amino-acid polypeptide reads, in one-letter code: Zinc finger protein 536 (1302 aa).

Residues Met1 to Leu26 form a disordered region. 7 consecutive C2H2-type zinc fingers follow at residues Tyr130–His152, Phe158–His180, Phe274–His297, Tyr300–His323, Phe345–His367, His373–His395, and Thr631–His653. A disordered region spans residues Ser650–Gly736. Residues Arg657–Ser676 are compositionally biased toward basic and acidic residues. Over residues Gly677–Glu698 the composition is skewed to polar residues. C2H2-type zinc fingers lie at residues Lys753 to His775 and Tyr781 to His803. Disordered regions lie at residues His804–Pro832, Gly855–Ser897, Lys935–Leu988, and Asn1133–Lys1261. A phosphoserine mark is found at Ser828 and Ser829. Positions Gly869–Ser883 are enriched in polar residues. Residues Lys935–Gln973 are compositionally biased toward basic and acidic residues. Acidic residues-rich tracts occupy residues Asp1161–Met1171 and Asn1179–Pro1188. A compositionally biased stretch (low complexity) spans Leu1198–Ser1212.

It belongs to the krueppel C2H2-type zinc-finger protein family. As to expression, expressed predominantly in the brain, while a weak signal is also detected in the heart and testis. Expression is abundant in neuronal cells of the cerebral cortex, hippocampus and hypothalamic area (at protein level).

The protein localises to the nucleus. Its function is as follows. Transcriptional repressor that negatively regulates neuron differentiation by repressing retinoic acid-induced gene transcription. Binds and interrupts RARA from binding to retinoic acid response elements (RARE) composed of tandem 5'-AGGTCA-3' sites known as DR1-DR5. Recognizes and binds 2 copies of the core DNA sequence 5'-CCCCCA-3'. The chain is Zinc finger protein 536 (Znf536) from Mus musculus (Mouse).